The chain runs to 311 residues: Probable manganese-dependent inorganic pyrophosphatase (311 aa).

Histidine 9, aspartate 13, aspartate 15, aspartate 75, histidine 97, and aspartate 149 together coordinate Mn(2+).

Belongs to the PPase class C family. It depends on Mn(2+) as a cofactor.

Its subcellular location is the cytoplasm. It carries out the reaction diphosphate + H2O = 2 phosphate + H(+). In Lactobacillus delbrueckii subsp. bulgaricus (strain ATCC BAA-365 / Lb-18), this protein is Probable manganese-dependent inorganic pyrophosphatase.